Reading from the N-terminus, the 67-residue chain is Protein AaeX (67 aa).

The next 2 helical transmembrane spans lie at 3–23 (LFPVIVVFGLSFPPIFFELLL) and 43–63 (FVWHPALFNTALYCCLFYLIS).

Belongs to the AaeX family.

The protein localises to the cell membrane. This is Protein AaeX from Escherichia coli (strain K12 / DH10B).